We begin with the raw amino-acid sequence, 326 residues long: Diphthine methyltransferase (326 aa).

4 WD repeats span residues 65–105, 113–152, 155–195, and 293–326; these read MHCD…ELMF, DSSV…IKNK, EHDY…SCIW, and EHES…WEDI.

Belongs to the DPH7 family.

The protein resides in the cytoplasm. The protein localises to the nucleus. It carries out the reaction diphthine methyl ester-[translation elongation factor 2] + H2O = diphthine-[translation elongation factor 2] + methanol + H(+). Its pathway is protein modification; peptidyl-diphthamide biosynthesis. In terms of biological role, catalyzes the demethylation of diphthine methyl ester to form diphthine, an intermediate in diphthamide biosynthesis, a post-translational modification of histidine which occurs in translation elongation factor 2 (eft201 and eft202). In Schizosaccharomyces pombe (strain 972 / ATCC 24843) (Fission yeast), this protein is Diphthine methyltransferase (rrt2).